The primary structure comprises 212 residues: MKNIDDLVDSASDLAQRGLSKGEIADELNVSRETASWLVERSGTGTEPDTSDDGGPHDIHVDWSAVGRDSNRLYHAGAAMADLLSKKGDDVDLTIGIEKAGAPLATTVARELETDLGTYAPTKHQWDDDESETSDGSFSRNFAQIRNRDCYVVDDTITSGKTMGETIDAIHEQGGNPVACVVLADKRGIGDIRGVPVYSLLQVIRVGSDGDS.

The segment at 38 to 60 (LVERSGTGTEPDTSDDGGPHDIH) is disordered.

This sequence belongs to the purine/pyrimidine phosphoribosyltransferase family. GfcR subfamily.

Functionally, DNA-binding transcriptional regulator that functions as a regulator of central sugar catabolic pathways. This chain is Transcriptional regulator GfcR, found in Haloarcula marismortui (strain ATCC 43049 / DSM 3752 / JCM 8966 / VKM B-1809) (Halobacterium marismortui).